We begin with the raw amino-acid sequence, 458 residues long: MHDKTWSGRFNEPVSELVKQYTASIGFDRRLAEWDIQGSLAHAQMLKETGVLDEGDLADIRRGMAEILEEIRSGKIEWSSDLEDVHMNIERRLTDKIGDAGKRLHTGRSRNDQVATDIRLWLRDQITVIQSLIQSLQTALLDLAEQNAETVMPGFTHLQVAQPVSFGHHMLAYVEMLGRDNERMADCRCRVNRMPLGAAALAGTTYPIQREITAELLGFEQICQNSLDAVSDRDFAIEFTAAASLVMVHLSRLSEELILWMSPRFGFIDIADRFCTGSSIMPQKKNPDVPELVRGKSGRVIGHLIGLITLMKSQPLAYNKDNQEDKEPLFDTADTLIDTLRIYADMMRGVTVKPDNMRAAVMQGFATATDLADYLVKKGMPFRDAHEVVAQAVRHADQAGVDLSELPLEVLQGFSDLIADDVYGVLTPEGSLNARNHLGGTAPEQVRFQVKRWREMLA.

Belongs to the lyase 1 family. Argininosuccinate lyase subfamily.

Its subcellular location is the cytoplasm. The enzyme catalyses 2-(N(omega)-L-arginino)succinate = fumarate + L-arginine. It functions in the pathway amino-acid biosynthesis; L-arginine biosynthesis; L-arginine from L-ornithine and carbamoyl phosphate: step 3/3. This is Argininosuccinate lyase from Neisseria meningitidis serogroup C (strain 053442).